Here is a 410-residue protein sequence, read N- to C-terminus: Arginine deiminase (410 aa).

The Amidino-cysteine intermediate role is filled by Cys400.

Belongs to the arginine deiminase family.

It localises to the cytoplasm. It carries out the reaction L-arginine + H2O = L-citrulline + NH4(+). The protein operates within amino-acid degradation; L-arginine degradation via ADI pathway; carbamoyl phosphate from L-arginine: step 1/2. The polypeptide is Arginine deiminase (Bacillus cereus (strain ATCC 10987 / NRS 248)).